A 528-amino-acid chain; its full sequence is MSMKWTSALLLIQLSCYLSSGNCGKVLVWPTEFSHWMNIKTILDELVQRGHEVTVLAYSPSILPGPNNPSALKFEICPTSLTETEFEDSVTQLVKRWSDIPKDTFWPHFLQVQEMMWTYGDMIRKFCKDVVSNKKLMKKLQESRFDVVLADAISPCGELLAELLKIPFVYSLRFSPGYAIEKHGGGFLFPPSYVPVVMSEFSDQMTFMERVKNMIYMVYFDFWFQAWDTKKWDQFYSEVLGRPTTLFETMAKAEIWLIRNYWDFQFPHPLLPHVELVGGLHCKPAKPLPKEMEGFVQSSGDNGVVVFSLGSMVSNMSEERANVIASALAKIPQKVLWRFDGNKPDTLGLNTQLYKWLPQNDLLGHPKTRAFITHGGANAIYEAIYHGIPMVGVPLFADQLDNIAHMKAKGARVSLDFNTMSSTDLLHALKTVINDPFYKENAMKLSSIHHDQPVKPLDRAVFWIEFVMRHKGAKHLRVAAYDLTWFQYHSLDVIGFLLACVATVIFIITKCLFCVLKFVRTGKKGKRD.

Positions 1–23 (MSMKWTSALLLIQLSCYLSSGNC) are cleaved as a signal peptide. The residue at position 135 (K135) is an N6-succinyllysine. N-linked (GlcNAc...) asparagine glycosylation is present at N315. A helical membrane pass occupies residues 493 to 513 (VIGFLLACVATVIFIITKCLF).

This sequence belongs to the UDP-glycosyltransferase family. As to expression, expressed in several tissues, including prostate, testis, mammary gland, kidney, adrenals and intestine.

It is found in the microsome membrane. It localises to the endoplasmic reticulum membrane. The catalysed reaction is glucuronate acceptor + UDP-alpha-D-glucuronate = acceptor beta-D-glucuronoside + UDP + H(+). Its function is as follows. UDPGTs are of major importance in the conjugation and subsequent elimination of potentially toxic xenobiotics and endogenous compounds. This isozyme has glucuronidating capacity on testosterone, dihydrotestosterone, 5-alpha-androstane-3-alpha,17-beta-diol, androsterone, oestradiol, tetrahydroaldosterone and tetrahydrocortisone. This enzyme is essential to inactivation of several steroids. The protein is UDP-glucuronosyltransferase 2B30 (UGT2B30) of Macaca fascicularis (Crab-eating macaque).